Consider the following 214-residue polypeptide: Large ribosomal subunit protein uL3 (214 aa).

It belongs to the universal ribosomal protein uL3 family. Part of the 50S ribosomal subunit. Forms a cluster with proteins L14 and L19.

Functionally, one of the primary rRNA binding proteins, it binds directly near the 3'-end of the 23S rRNA, where it nucleates assembly of the 50S subunit. The sequence is that of Large ribosomal subunit protein uL3 from Streptomyces coelicolor (strain ATCC BAA-471 / A3(2) / M145).